The sequence spans 275 residues: Lectin 8 (275 aa).

An N-terminal signal peptide occupies residues 1–31; that stretch reads MANSNPKLLVTQNPFSVFLLTFLLLITNVKS. Asn55 and Asn150 each carry an N-linked (GlcNAc...) asparagine glycan.

It belongs to the leguminous lectin family.

Functionally, may be involved in arbuscular mycorrhizal (AM) symbiosis with AM fungi. The sequence is that of Lectin 8 from Medicago truncatula (Barrel medic).